The chain runs to 121 residues: Small ribosomal subunit protein uS13 (121 aa).

Residues 94 to 121 (GLPMRGQRTRTNARTRKGPRKAAAALKK) are disordered.

This sequence belongs to the universal ribosomal protein uS13 family. As to quaternary structure, part of the 30S ribosomal subunit. Forms a loose heterodimer with protein S19. Forms two bridges to the 50S subunit in the 70S ribosome.

Functionally, located at the top of the head of the 30S subunit, it contacts several helices of the 16S rRNA. In the 70S ribosome it contacts the 23S rRNA (bridge B1a) and protein L5 of the 50S subunit (bridge B1b), connecting the 2 subunits; these bridges are implicated in subunit movement. Contacts the tRNAs in the A and P-sites. The polypeptide is Small ribosomal subunit protein uS13 (Polaromonas sp. (strain JS666 / ATCC BAA-500)).